A 263-amino-acid polypeptide reads, in one-letter code: Endonuclease 8 (263 aa).

Pro2 functions as the Schiff-base intermediate with DNA in the catalytic mechanism. The active-site Proton donor is the Glu3. Catalysis depends on Lys53, which acts as the Proton donor; for beta-elimination activity. Residues Gln70, Arg125, and Asn169 each contribute to the DNA site. The segment at 229–263 adopts an FPG-type zinc-finger fold; that stretch reads KVFHRDGEPCERCGSIIEKTTLSSRPFYWCPGCQH. The Proton donor; for delta-elimination activity role is filled by Arg253.

It belongs to the FPG family. Zn(2+) serves as cofactor.

The enzyme catalyses 2'-deoxyribonucleotide-(2'-deoxyribose 5'-phosphate)-2'-deoxyribonucleotide-DNA = a 3'-end 2'-deoxyribonucleotide-(2,3-dehydro-2,3-deoxyribose 5'-phosphate)-DNA + a 5'-end 5'-phospho-2'-deoxyribonucleoside-DNA + H(+). Its function is as follows. Involved in base excision repair of DNA damaged by oxidation or by mutagenic agents. Acts as a DNA glycosylase that recognizes and removes damaged bases. Has a preference for oxidized pyrimidines, such as thymine glycol, 5,6-dihydrouracil and 5,6-dihydrothymine. Has AP (apurinic/apyrimidinic) lyase activity and introduces nicks in the DNA strand. Cleaves the DNA backbone by beta-delta elimination to generate a single-strand break at the site of the removed base with both 3'- and 5'-phosphates. The chain is Endonuclease 8 from Escherichia coli O9:H4 (strain HS).